The sequence spans 40 residues: Cytochrome c3 hydrogenase small chain (40 aa).

The cofactor is Fe cation.

The catalysed reaction is 2 Fe(III)-[cytochrome c3] + H2 = 2 Fe(II)-[cytochrome c3] + 2 H(+). The protein is Cytochrome c3 hydrogenase small chain (hoxK) of Acidithiobacillus ferrooxidans (Thiobacillus ferrooxidans).